Here is a 129-residue protein sequence, read N- to C-terminus: Small ribosomal subunit protein uS11 (129 aa).

Belongs to the universal ribosomal protein uS11 family. As to quaternary structure, part of the 30S ribosomal subunit. Interacts with proteins S7 and S18. Binds to IF-3.

In terms of biological role, located on the platform of the 30S subunit, it bridges several disparate RNA helices of the 16S rRNA. Forms part of the Shine-Dalgarno cleft in the 70S ribosome. In Serratia proteamaculans (strain 568), this protein is Small ribosomal subunit protein uS11.